Here is a 354-residue protein sequence, read N- to C-terminus: Uroporphyrinogen decarboxylase (354 aa).

Residues 25-29 (RQAGR), phenylalanine 44, aspartate 75, tyrosine 152, threonine 207, and histidine 330 each bind substrate.

Belongs to the uroporphyrinogen decarboxylase family. As to quaternary structure, homodimer.

The protein resides in the cytoplasm. It carries out the reaction uroporphyrinogen III + 4 H(+) = coproporphyrinogen III + 4 CO2. The protein operates within porphyrin-containing compound metabolism; protoporphyrin-IX biosynthesis; coproporphyrinogen-III from 5-aminolevulinate: step 4/4. Its function is as follows. Catalyzes the decarboxylation of four acetate groups of uroporphyrinogen-III to yield coproporphyrinogen-III. The sequence is that of Uroporphyrinogen decarboxylase from Xylella fastidiosa (strain Temecula1 / ATCC 700964).